The following is an 887-amino-acid chain: MNSTSTATPIANENHTPMMQQYLRIKAEHPNEIVFYRMGDFYELFFDDAKKAAKLLDVTLTARGKSNGEPIPMAGVPYHAAENYLAKLVRLGVSVAIVEQVGDPATTKGPVERKVMRIVTPGTVSDEALLDETRDNLLVAITLKDERYGISSLDMGSGRFTVFEVADEEALIGEIERLQPAELLAPELLTVPNIISLRAGYRRRPDWEFEYDTAQRLLTRHFGTQDLSGFGCEDFTAGISAAGCLFAYAQETQKTTLSHVAKLVLDNPETKVTLDAATRRNLELDTNLAGTEDNTLFSVLNTTTTAMGGRLLRRWLHSPLRDIYILNQRQSAIEALLDNYQFEPLRHTLKHISDLERILGRLALRSARPRDLSRLCASIAEFPAIQQHLNGIDSPLLKKLAKEIREFPDLVDLLSRALMENPPVVIREGGVIAEGFDEELDELRAISTNAGDYLIKLEEQERAKTGLSTLKVGYNRVHGYYIEISKSQASSAPTEYIRRQTLKNAERFITPELKTFEDKALSAKSRALAREKGLYDDLIETLNEQLRELQVAASGVAELDVLTTLAERSNLLNFCKPELYEGEGIFIEQGRHPVVEQVLDDPFVPNDLLLDTDQRMLIITGPNMGGKSTYMRQTALIVLLAQIGCYVPASACKLGLVDRIFTRIGSSDDLAGGRSTFMVEMTETANILNNATRNSLVLMDEIGRGTSTYDGLSLAWACVEHLANNLHAFTLFATHYFELTGLPKALAGVQNVHLDATEHNDSIVFLHKIQPGPASKSFGLQVAKLAGIPSNVIADAGGHLRRLEAQPTVDTPHQFPAPEPIALQEPVAEPEPNKPAAAAKTKPASPQPDLFASAAPSAVEIKLRSINPDNLTPRQALQALYDLKDIS.

621–628 is a binding site for ATP; sequence GPNMGGKS. Residues 828–853 form a disordered region; the sequence is AEPEPNKPAAAAKTKPASPQPDLFAS. Residues 834 to 848 show a composition bias toward low complexity; that stretch reads KPAAAAKTKPASPQP.

Belongs to the DNA mismatch repair MutS family.

In terms of biological role, this protein is involved in the repair of mismatches in DNA. It is possible that it carries out the mismatch recognition step. This protein has a weak ATPase activity. The sequence is that of DNA mismatch repair protein MutS from Saccharophagus degradans (strain 2-40 / ATCC 43961 / DSM 17024).